Reading from the N-terminus, the 514-residue chain is Double-stranded RNA-binding protein 6 (514 aa).

2 consecutive DRBM domains span residues 1–70 (MYKN…ALAR) and 87–155 (VYKN…SLRQ). Disordered regions lie at residues 195–268 (NNPH…SRFP) and 455–496 (EASQ…KDDH). 3 stretches are compositionally biased toward polar residues: residues 216–225 (FPQSSHSSYS), 249–263 (AASQ…SPNP), and 473–484 (SPDSLPKTQLKT).

Binds double-stranded RNA. The chain is Double-stranded RNA-binding protein 6 (DRB6) from Oryza sativa subsp. japonica (Rice).